A 261-amino-acid polypeptide reads, in one-letter code: Succinate dehydrogenase iron-sulfur subunit (261 aa).

The 92-residue stretch at 28–119 (RKVQVYRYDP…DIKIYPLPHM (92 aa)) folds into the 2Fe-2S ferredoxin-type domain. 3 residues coordinate [2Fe-2S] cluster: Cys-80, Cys-85, and Cys-100. Residues 161 to 191 (DREKLDGLYECILCACCSTSCPSYWWNSDKY) enclose the 4Fe-4S ferredoxin-type domain. Positions 171, 174, and 177 each coordinate [4Fe-4S] cluster. Cys-181 contacts [3Fe-4S] cluster. An a ubiquinone-binding site is contributed by Trp-186. Positions 228 and 234 each coordinate [3Fe-4S] cluster. [4Fe-4S] cluster is bound at residue Cys-238.

The protein belongs to the succinate dehydrogenase/fumarate reductase iron-sulfur protein family. In terms of assembly, part of an enzyme complex containing four subunits: a flavoprotein, an iron-sulfur, cytochrome b-556, and a hydrophobic anchor protein. Requires [2Fe-2S] cluster as cofactor. [3Fe-4S] cluster serves as cofactor. [4Fe-4S] cluster is required as a cofactor.

The catalysed reaction is a quinone + succinate = fumarate + a quinol. It participates in carbohydrate metabolism; tricarboxylic acid cycle; fumarate from succinate (bacterial route): step 1/1. This Rickettsia typhi (strain ATCC VR-144 / Wilmington) protein is Succinate dehydrogenase iron-sulfur subunit (sdhB).